The primary structure comprises 818 residues: Beta-glucosidase (818 aa).

The active site involves Asp-222. Residues 386–538 (VFSGEMTVEY…GDAGIAEAVE (153 aa)) enclose the PA14 domain.

The protein belongs to the glycosyl hydrolase 3 family.

It localises to the cytoplasm. It carries out the reaction Hydrolysis of terminal, non-reducing beta-D-glucosyl residues with release of beta-D-glucose.. In terms of biological role, involved in modifying a vir-inducing plant signal molecule. Hydrolyzes coniferin but not cellobiose. The sequence is that of Beta-glucosidase (cbg-1) from Rhizobium radiobacter (Agrobacterium tumefaciens).